Here is an 880-residue protein sequence, read N- to C-terminus: Translation initiation factor IF-2 (880 aa).

Composition is skewed to basic and acidic residues over residues 34 to 43 (HMSSLDDKQV), 59 to 69 (TEKDSKNSSRK), 82 to 94 (RRRDNKNEHDNRH), 110 to 131 (NRRENEDKKTTSAKPAARDLLN), 167 to 181 (KKVENTRKPKEEKLE), 230 to 240 (QKEETKPTRKK), and 248 to 261 (EVPDYERERSEHSD). The disordered stretch occupies residues 34–297 (HMSSLDDKQV…KERPLPETLV (264 aa)). Basic residues predominate over residues 262 to 275 (KARRRRNKKNKRIN). Over residues 276–292 (QSKEVKKQPTQRKERPL) the composition is skewed to basic and acidic residues. Positions 381 to 550 (KRPPVVTIMG…LLQADVMELK (170 aa)) constitute a tr-type G domain. A G1 region spans residues 390–397 (GHVDHGKT). Residue 390–397 (GHVDHGKT) coordinates GTP. The tract at residues 415–419 (GITQR) is G2. Residues 436–439 (DTPG) form a G3 region. GTP contacts are provided by residues 436-440 (DTPGH) and 490-493 (NKID). A G4 region spans residues 490-493 (NKID). A G5 region spans residues 526–528 (SAK).

It belongs to the TRAFAC class translation factor GTPase superfamily. Classic translation factor GTPase family. IF-2 subfamily.

It is found in the cytoplasm. Functionally, one of the essential components for the initiation of protein synthesis. Protects formylmethionyl-tRNA from spontaneous hydrolysis and promotes its binding to the 30S ribosomal subunits. Also involved in the hydrolysis of GTP during the formation of the 70S ribosomal complex. The chain is Translation initiation factor IF-2 from Lactobacillus johnsonii (strain CNCM I-12250 / La1 / NCC 533).